The primary structure comprises 126 residues: Probable prefoldin subunit 4 (126 aa).

Belongs to the prefoldin subunit beta family. Heterohexamer of two PFD-alpha type and four PFD-beta type subunits.

Functionally, binds specifically to cytosolic chaperonin (c-CPN) and transfers target proteins to it. Binds to nascent polypeptide chain and promotes folding in an environment in which there are many competing pathways for nonnative proteins. In Caenorhabditis elegans, this protein is Probable prefoldin subunit 4 (pfd-4).